A 181-amino-acid chain; its full sequence is Adenine phosphoribosyltransferase (181 aa).

The protein belongs to the purine/pyrimidine phosphoribosyltransferase family. Homodimer.

The protein localises to the cytoplasm. The enzyme catalyses AMP + diphosphate = 5-phospho-alpha-D-ribose 1-diphosphate + adenine. The protein operates within purine metabolism; AMP biosynthesis via salvage pathway; AMP from adenine: step 1/1. Functionally, catalyzes a salvage reaction resulting in the formation of AMP, that is energically less costly than de novo synthesis. The sequence is that of Adenine phosphoribosyltransferase from Chelativorans sp. (strain BNC1).